A 352-amino-acid chain; its full sequence is Probable dual-specificity RNA methyltransferase RlmN (352 aa).

The active-site Proton acceptor is the E93. Residues 99–332 form the Radical SAM core domain; the sequence is TAKRLTVCVS…ATVRQTRGLD (234 aa). C106 and C337 are disulfide-bonded. 3 residues coordinate [4Fe-4S] cluster: C113, C117, and C120. S-adenosyl-L-methionine contacts are provided by residues 160-161, S190, 213-215, and N294; these read GE and SLH. The S-methylcysteine intermediate role is filled by C337.

It belongs to the radical SAM superfamily. RlmN family. The cofactor is [4Fe-4S] cluster.

Its subcellular location is the cytoplasm. The enzyme catalyses adenosine(2503) in 23S rRNA + 2 reduced [2Fe-2S]-[ferredoxin] + 2 S-adenosyl-L-methionine = 2-methyladenosine(2503) in 23S rRNA + 5'-deoxyadenosine + L-methionine + 2 oxidized [2Fe-2S]-[ferredoxin] + S-adenosyl-L-homocysteine. It carries out the reaction adenosine(37) in tRNA + 2 reduced [2Fe-2S]-[ferredoxin] + 2 S-adenosyl-L-methionine = 2-methyladenosine(37) in tRNA + 5'-deoxyadenosine + L-methionine + 2 oxidized [2Fe-2S]-[ferredoxin] + S-adenosyl-L-homocysteine. Functionally, specifically methylates position 2 of adenine 2503 in 23S rRNA and position 2 of adenine 37 in tRNAs. The protein is Probable dual-specificity RNA methyltransferase RlmN of Synechococcus sp. (strain JA-2-3B'a(2-13)) (Cyanobacteria bacterium Yellowstone B-Prime).